Consider the following 391-residue polypeptide: Small ribosomal subunit protein bS1 (391 aa).

S1 motif domains are found at residues 16-90 (GDKV…LSRR), 108-173 (NEII…LSRK), 194-262 (GDVI…LSIK), and 279-348 (NDVI…LSIK).

It belongs to the bacterial ribosomal protein bS1 family.

In terms of biological role, binds mRNA; thus facilitating recognition of the initiation point. It is needed to translate mRNA with a short Shine-Dalgarno (SD) purine-rich sequence. This is Small ribosomal subunit protein bS1 (rpsA) from Staphylococcus aureus (strain MSSA476).